Reading from the N-terminus, the 163-residue chain is Nucleotide-binding protein cbdbA1256 (163 aa).

Belongs to the YajQ family.

Its function is as follows. Nucleotide-binding protein. This is Nucleotide-binding protein cbdbA1256 from Dehalococcoides mccartyi (strain CBDB1).